We begin with the raw amino-acid sequence, 362 residues long: Oxygen-dependent coproporphyrinogen-III oxidase (362 aa).

Ser118 is a substrate binding site. Residues His122 and His132 each contribute to the a divalent metal cation site. His132 acts as the Proton donor in catalysis. 134 to 136 is a binding site for substrate; that stretch reads NYR. A divalent metal cation is bound by residues His166 and His196. Positions 286–321 are important for dimerization; sequence YVEFNLVWDRGTIFGLQTNGRTESILMSLPPLVRWE.

The protein belongs to the aerobic coproporphyrinogen-III oxidase family. As to quaternary structure, homodimer. A divalent metal cation serves as cofactor.

Its subcellular location is the cytoplasm. The enzyme catalyses coproporphyrinogen III + O2 + 2 H(+) = protoporphyrinogen IX + 2 CO2 + 2 H2O. It functions in the pathway porphyrin-containing compound metabolism; protoporphyrin-IX biosynthesis; protoporphyrinogen-IX from coproporphyrinogen-III (O2 route): step 1/1. In terms of biological role, involved in the heme and chlorophyll biosynthesis. Catalyzes the aerobic oxidative decarboxylation of propionate groups of rings A and B of coproporphyrinogen-III to yield the vinyl groups in protoporphyrinogen-IX. The chain is Oxygen-dependent coproporphyrinogen-III oxidase from Synechococcus sp. (strain CC9605).